A 130-amino-acid chain; its full sequence is Small ribosomal subunit protein uS11c (130 aa).

This sequence belongs to the universal ribosomal protein uS11 family. Part of the 30S ribosomal subunit.

It localises to the plastid. It is found in the chloroplast. The polypeptide is Small ribosomal subunit protein uS11c (Adiantum capillus-veneris (Maidenhair fern)).